The following is an 89-amino-acid chain: Small ribosomal subunit protein uS19 (89 aa).

The protein belongs to the universal ribosomal protein uS19 family.

Protein S19 forms a complex with S13 that binds strongly to the 16S ribosomal RNA. The sequence is that of Small ribosomal subunit protein uS19 from Vesicomyosocius okutanii subsp. Calyptogena okutanii (strain HA).